A 173-amino-acid polypeptide reads, in one-letter code: Adenine phosphoribosyltransferase (173 aa).

This sequence belongs to the purine/pyrimidine phosphoribosyltransferase family. Homodimer.

The protein localises to the cytoplasm. The enzyme catalyses AMP + diphosphate = 5-phospho-alpha-D-ribose 1-diphosphate + adenine. Its pathway is purine metabolism; AMP biosynthesis via salvage pathway; AMP from adenine: step 1/1. Functionally, catalyzes a salvage reaction resulting in the formation of AMP, that is energically less costly than de novo synthesis. This is Adenine phosphoribosyltransferase from Macrococcus caseolyticus (strain JCSC5402) (Macrococcoides caseolyticum).